A 397-amino-acid polypeptide reads, in one-letter code: Protein irld-34 (397 aa).

The chain is Protein irld-34 from Caenorhabditis elegans.